The sequence spans 311 residues: Ribosomal RNA large subunit methyltransferase F (311 aa).

This sequence belongs to the methyltransferase superfamily. METTL16/RlmF family.

The protein resides in the cytoplasm. The catalysed reaction is adenosine(1618) in 23S rRNA + S-adenosyl-L-methionine = N(6)-methyladenosine(1618) in 23S rRNA + S-adenosyl-L-homocysteine + H(+). Specifically methylates the adenine in position 1618 of 23S rRNA. The polypeptide is Ribosomal RNA large subunit methyltransferase F (Pectobacterium atrosepticum (strain SCRI 1043 / ATCC BAA-672) (Erwinia carotovora subsp. atroseptica)).